A 239-amino-acid polypeptide reads, in one-letter code: ATP synthase subunit a, chloroplastic (239 aa).

5 helical membrane passes run 30–50, 87–107, 126–146, 191–211, and 212–232; these read VLLV…LGTF, VPFI…GALV, INTT…AGLS, LVVA…VMVL, and GLFA…SYIG.

The protein belongs to the ATPase A chain family. As to quaternary structure, F-type ATPases have 2 components, CF(1) - the catalytic core - and CF(0) - the membrane proton channel. CF(1) has five subunits: alpha(3), beta(3), gamma(1), delta(1), epsilon(1). CF(0) has four main subunits: a, b, b' and c.

It is found in the plastid. The protein resides in the chloroplast thylakoid membrane. Key component of the proton channel; it plays a direct role in the translocation of protons across the membrane. The protein is ATP synthase subunit a, chloroplastic of Cyanidium caldarium (Red alga).